The chain runs to 461 residues: MLKEYRTVKEVVGPLMLVDQVESVSFDELVEIELHNGEKRRGRVLEINKDKALVQLFEGSAGINIKGAKVKFLGKPLELGVSEDMLGRVFDGLGNPKDGGPKIIPDEKRDISGIPINPVARNYPDEFIQTGVSAIDGLNTLVRGQKLPVFSGSGLPHAELAAQIARQAKVLNSDSKFAVVFAAIGTTFEEAQYFIDDFTKTGAIDRAVLFINLANDPAIERIATPRMALTAAEYLAFEKGMHVLVIMTDITNYCEALREVSAARKEVPGRRGYPGYLYTDLSTIYERAGRILGKEGSITQIPILTMPEDDKTHPIPDLTGYITEGQIILSRELYKKGIMPPIDVLPSLSRLKDKGIGKEKTREDHADTMNQLFAAYAQGKQAKELSVILGESALSDTDKLYAKFADAFEGEYVSQGFTTNRTIEETLNLGWKLLTILPKSELKRIRDEYLEKYLNKAEESK.

This sequence belongs to the ATPase alpha/beta chains family.

Produces ATP from ADP in the presence of a proton gradient across the membrane. The V-type beta chain is a regulatory subunit. The polypeptide is V-type ATP synthase beta chain (Clostridium botulinum (strain 657 / Type Ba4)).